Consider the following 331-residue polypeptide: UDP-GalNAc:beta-1,3-N-acetylgalactosaminyltransferase 1 (331 aa).

Over 1 to 20 the chain is Cytoplasmic; sequence MAPAVLTALPNRMSLRSLKW. The helical; Signal-anchor for type II membrane protein transmembrane segment at 21–43 threads the bilayer; sequence SLLLLSLLSFLVIWYLSLPHYNV. The Lumenal segment spans residues 44 to 331; that stretch reads IERVNWMYFY…VMLRNTTCHY (288 aa). N-linked (GlcNAc...) asparagine glycans are attached at residues Asn-72, Asn-154, Asn-198, Asn-212, and Asn-326.

Belongs to the glycosyltransferase 31 family. Mg(2+) is required as a cofactor. As to expression, detected in brain, ovary, kidney, uterus and stomach. In ovary, specifically expressed in follicular granulosa cells and shows particularly strong expression at later stages of follicle development.

The protein localises to the golgi apparatus membrane. It catalyses the reaction a globoside Gb3Cer (d18:1(4E)) + UDP-N-acetyl-alpha-D-galactosamine = a globoside Gb4Cer (d18:1(4E)) + UDP + H(+). It participates in protein modification; protein glycosylation. In terms of biological role, transfers N-acetylgalactosamine onto globotriaosylceramide. Plays a critical role in preimplantation stage embryonic development. The protein is UDP-GalNAc:beta-1,3-N-acetylgalactosaminyltransferase 1 of Mus musculus (Mouse).